The sequence spans 92 residues: Small ribosomal subunit protein uS19 (92 aa).

Belongs to the universal ribosomal protein uS19 family.

Its function is as follows. Protein S19 forms a complex with S13 that binds strongly to the 16S ribosomal RNA. This chain is Small ribosomal subunit protein uS19, found in Clostridium botulinum (strain Eklund 17B / Type B).